Consider the following 564-residue polypeptide: Eukaryotic translation initiation factor 3 subunit L (564 aa).

An N-acetylserine modification is found at Ser-2. One can recognise a PCI domain in the interval 331–537 (DAIRVFANIL…IHIADTKVAR (207 aa)). N6-acetyllysine occurs at positions 465 and 549.

The protein belongs to the eIF-3 subunit L family. Component of the eukaryotic translation initiation factor 3 (eIF-3) complex, which is composed of 13 subunits: EIF3A, EIF3B, EIF3C, EIF3D, EIF3E, EIF3F, EIF3G, EIF3H, EIF3I, EIF3J, EIF3K, EIF3L and EIF3M. The eIF-3 complex appears to include 3 stable modules: module A is composed of EIF3A, EIF3B, EIF3G and EIF3I; module B is composed of EIF3F, EIF3H, and EIF3M; and module C is composed of EIF3C, EIF3D, EIF3E, EIF3K and EIF3L. EIF3C of module C binds EIF3B of module A and EIF3H of module B, thereby linking the three modules. EIF3J is a labile subunit that binds to the eIF-3 complex via EIF3B. The eIF-3 complex may interact with RPS6KB1 under conditions of nutrient depletion. Mitogenic stimulation may lead to binding and activation of a complex composed of MTOR and RPTOR, leading to phosphorylation and release of RPS6KB1 and binding of EIF4B to eIF-3. Interacts with RRN3.

Its subcellular location is the cytoplasm. Functionally, component of the eukaryotic translation initiation factor 3 (eIF-3) complex, which is required for several steps in the initiation of protein synthesis. The eIF-3 complex associates with the 40S ribosome and facilitates the recruitment of eIF-1, eIF-1A, eIF-2:GTP:methionyl-tRNAi and eIF-5 to form the 43S pre-initiation complex (43S PIC). The eIF-3 complex stimulates mRNA recruitment to the 43S PIC and scanning of the mRNA for AUG recognition. The eIF-3 complex is also required for disassembly and recycling of post-termination ribosomal complexes and subsequently prevents premature joining of the 40S and 60S ribosomal subunits prior to initiation. The eIF-3 complex specifically targets and initiates translation of a subset of mRNAs involved in cell proliferation, including cell cycling, differentiation and apoptosis, and uses different modes of RNA stem-loop binding to exert either translational activation or repression. The chain is Eukaryotic translation initiation factor 3 subunit L (Eif3l) from Mus musculus (Mouse).